A 360-amino-acid polypeptide reads, in one-letter code: GTPase Obg (360 aa).

An Obg domain is found at 1–156 (MFVDSVEIII…KCVRLELKLI (156 aa)). The OBG-type G domain maps to 157–360 (ADIGLVGFPN…LKFVLLEALP (204 aa)). Residues 163–170 (GFPNAGKS), 188–192 (FTTLV), 210–213 (DIPG), 279–282 (NKCD), and 341–343 (SAV) each bind GTP. Residues Ser-170 and Thr-190 each contribute to the Mg(2+) site.

This sequence belongs to the TRAFAC class OBG-HflX-like GTPase superfamily. OBG GTPase family. As to quaternary structure, monomer. Requires Mg(2+) as cofactor.

The protein resides in the cytoplasm. Functionally, an essential GTPase which binds GTP, GDP and possibly (p)ppGpp with moderate affinity, with high nucleotide exchange rates and a fairly low GTP hydrolysis rate. Plays a role in control of the cell cycle, stress response, ribosome biogenesis and in those bacteria that undergo differentiation, in morphogenesis control. The chain is GTPase Obg from Helicobacter pylori (strain HPAG1).